Reading from the N-terminus, the 306-residue chain is Ribonuclease BN (306 aa).

Positions 64, 66, 68, 69, 141, 212, and 270 each coordinate Zn(2+). Aspartate 68 acts as the Proton acceptor in catalysis.

It belongs to the RNase Z family. RNase BN subfamily. As to quaternary structure, homodimer. The cofactor is Zn(2+).

Functionally, zinc phosphodiesterase, which has both exoribonuclease and endoribonuclease activities. This Klebsiella pneumoniae (strain 342) protein is Ribonuclease BN.